Consider the following 58-residue polypeptide: MKTIKVTQTKSSSHRLKNHKLCLQGLGLRRIGHTVEVQDTPSNRGMINKVYYMVSVEE.

This sequence belongs to the universal ribosomal protein uL30 family. Part of the 50S ribosomal subunit.

The protein is Large ribosomal subunit protein uL30 of Acinetobacter baumannii (strain AB307-0294).